An 86-amino-acid chain; its full sequence is Thioredoxin (86 aa).

Catalysis depends on nucleophile residues Cys15 and Cys18. A disulfide bridge connects residues Cys15 and Cys18.

This sequence belongs to the glutaredoxin family.

Does not function as a glutathione-disulfide oxidoreductase in the presence of glutathione and glutathione reductase. Has low thioredoxin activity in vitro. This chain is Thioredoxin, found in Methanocaldococcus jannaschii (strain ATCC 43067 / DSM 2661 / JAL-1 / JCM 10045 / NBRC 100440) (Methanococcus jannaschii).